A 373-amino-acid polypeptide reads, in one-letter code: mRNA-decapping enzyme subunit 2 (373 aa).

Residues 106–234 enclose the Nudix hydrolase domain; the sequence is CRVPVTGAII…HGVSGLKLYM (129 aa). Residues 139–160 carry the Nudix box motif; that stretch reads GKKSKDEEDHACAIREVLEETG. Mg(2+) is bound by residues glutamate 154 and glutamate 158. ATP-binding residues include arginine 178 and tyrosine 233. Positions 233-250 are RNA binding; sequence YMVAPFLSSLKSWILKHP. Residues 275-342 are disordered; it reads GNGTATVESQ…ESHNTKPVVD (68 aa). The span at 298–323 shows a compositional bias: basic and acidic residues; sequence NSRKPELKRTTMESHSTKPELRKGTM. Residues 324–334 show a composition bias toward polar residues; that stretch reads ESHNTTATVES. The PDZ-binding signature appears at 370 to 373; that stretch reads GNSA.

This sequence belongs to the Nudix hydrolase family. DCP2 subfamily. As to quaternary structure, homodimer. Catalytic component of the decapping complex. Interacts with DCP1, DCP5 and VCS. The cofactor is Mn(2+). Mg(2+) serves as cofactor. In terms of tissue distribution, expressed in seedlings, mostly in root tips, root hairs, and the vascular system. Also present in roots, leaves, stems, and flowers.

It localises to the cytoplasm. Its subcellular location is the P-body. It catalyses the reaction a 5'-end (N(7)-methyl 5'-triphosphoguanosine)-ribonucleoside in mRNA + H2O = N(7)-methyl-GDP + a 5'-end phospho-ribonucleoside in mRNA + 2 H(+). With respect to regulation, inhibited by the product 7-methyl GDP. In terms of biological role, catalytic component of the decapping complex necessary for the degradation of mRNAs, both in normal mRNA turnover and in nonsense-mediated mRNA decay. Removes the 7-methyl guanine cap structure from mRNA molecules, yielding a 5'-phosphorylated mRNA fragment and 7m-GDP. Essential for postembryonic development, especially during the formation of the shoot apical meristem (SAM). This chain is mRNA-decapping enzyme subunit 2 (DCP2), found in Arabidopsis thaliana (Mouse-ear cress).